We begin with the raw amino-acid sequence, 87 residues long: Large ribosomal subunit protein bL31B (87 aa).

The protein belongs to the bacterial ribosomal protein bL31 family. Type B subfamily. In terms of assembly, part of the 50S ribosomal subunit.

The protein is Large ribosomal subunit protein bL31B of Halorhodospira halophila (strain DSM 244 / SL1) (Ectothiorhodospira halophila (strain DSM 244 / SL1)).